The chain runs to 559 residues: Formate--tetrahydrofolate ligase (559 aa).

68–75 (TPAGEGKT) contacts ATP.

It belongs to the formate--tetrahydrofolate ligase family.

It catalyses the reaction (6S)-5,6,7,8-tetrahydrofolate + formate + ATP = (6R)-10-formyltetrahydrofolate + ADP + phosphate. The protein operates within one-carbon metabolism; tetrahydrofolate interconversion. This is Formate--tetrahydrofolate ligase from Rhizobium etli (strain ATCC 51251 / DSM 11541 / JCM 21823 / NBRC 15573 / CFN 42).